The primary structure comprises 194 residues: MNLISSYKTEFELLRKFIEEEEERKETEKVAQKLANIFTKGKKVLICGNGGSNCDAMHFIEEFTGRFRKERRALPAISISDPSHITCVANDYGFEYIFSKGVEAYGQEGDMFIGISTSGNSPNVIKAVEQAKAQGLVTVGLLGKDGGKLKGMCDYEFIIPGKTSDRVQEIHMMILHIIIEGVERIMFPENYVEE.

An SIS domain is found at 34 to 188 (LANIFTKGKK…IEGVERIMFP (155 aa)). 49 to 51 (NGG) contacts substrate. Residues histidine 58 and glutamate 62 each contribute to the Zn(2+) site. Residues glutamate 62, 90–91 (ND), 116–118 (STS), serine 121, and glutamine 168 each bind substrate. Residues glutamine 168 and histidine 176 each contribute to the Zn(2+) site.

The protein belongs to the SIS family. GmhA subfamily. Zn(2+) serves as cofactor.

It is found in the cytoplasm. It carries out the reaction 2 D-sedoheptulose 7-phosphate = D-glycero-alpha-D-manno-heptose 7-phosphate + D-glycero-beta-D-manno-heptose 7-phosphate. Its pathway is carbohydrate biosynthesis; D-glycero-D-manno-heptose 7-phosphate biosynthesis; D-glycero-alpha-D-manno-heptose 7-phosphate and D-glycero-beta-D-manno-heptose 7-phosphate from sedoheptulose 7-phosphate: step 1/1. In terms of biological role, catalyzes the isomerization of sedoheptulose 7-phosphate in D-glycero-D-manno-heptose 7-phosphate. In Fusobacterium nucleatum subsp. nucleatum (strain ATCC 25586 / DSM 15643 / BCRC 10681 / CIP 101130 / JCM 8532 / KCTC 2640 / LMG 13131 / VPI 4355), this protein is Phosphoheptose isomerase.